A 145-amino-acid chain; its full sequence is Basic phospholipase A2 beta-bungarotoxin A-AL1 chain (145 aa).

A signal peptide spans 1-17 (MLIFLWCGAVCVSLLGA). The propeptide occupies 18–25 (ANIPPHPL). 5 cysteine pairs are disulfide-bonded: cysteine 52–cysteine 144, cysteine 54–cysteine 70, cysteine 76–cysteine 118, cysteine 86–cysteine 111, and cysteine 104–cysteine 116. Residues tyrosine 53, glycine 55, and glycine 57 each coordinate Ca(2+). Histidine 73 is an active-site residue. Aspartate 119 is an active-site residue.

It belongs to the phospholipase A2 family. Group I subfamily. G49 sub-subfamily. In terms of assembly, heterodimer; disulfide-linked. The A chains have phospholipase A2 activity and the B chains show homology with the basic protease inhibitors. It depends on Ca(2+) as a cofactor. Post-translationally, this enzyme lacks one of the seven disulfide bonds found in similar PLA2 proteins. In terms of tissue distribution, expressed by the venom gland.

It is found in the secreted. It carries out the reaction a 1,2-diacyl-sn-glycero-3-phosphocholine + H2O = a 1-acyl-sn-glycero-3-phosphocholine + a fatty acid + H(+). Functionally, snake venom phospholipase A2 (PLA2) that inhibits neuromuscular transmission by blocking acetylcholine release from the nerve termini. PLA2 catalyzes the calcium-dependent hydrolysis of the 2-acyl groups in 3-sn-phosphoglycerides. The protein is Basic phospholipase A2 beta-bungarotoxin A-AL1 chain of Bungarus multicinctus (Many-banded krait).